A 411-amino-acid polypeptide reads, in one-letter code: Meiotically up-regulated gene 147 protein (411 aa).

Disordered stretches follow at residues 1-52 (MLAQ…FENK), 102-137 (EREESGHDEEEADKDASFTGYYNSRNNDEEGSELAD), and 156-191 (HQHEDEFSSSNKDKGFTYEKPVTELPPKRPPYHYES). A compositionally biased stretch (polar residues) spans 33–43 (TQNESNLQQSE). The segment covering 156–172 (HQHEDEFSSSNKDKGFT) has biased composition (basic and acidic residues).

The protein localises to the cytoplasm. It is found in the nucleus. Its function is as follows. Has a role in meiosis. The polypeptide is Meiotically up-regulated gene 147 protein (mug147) (Schizosaccharomyces pombe (strain 972 / ATCC 24843) (Fission yeast)).